A 541-amino-acid chain; its full sequence is Chaperonin GroEL 1 (541 aa).

ATP is bound by residues 29–32 (TLGP), 86–90 (DGTTT), Gly-413, 479–481 (NAA), and Asp-495.

It belongs to the chaperonin (HSP60) family. As to quaternary structure, forms a cylinder of 14 subunits composed of two heptameric rings stacked back-to-back. Interacts with the co-chaperonin GroES.

The protein localises to the cytoplasm. The enzyme catalyses ATP + H2O + a folded polypeptide = ADP + phosphate + an unfolded polypeptide.. Together with its co-chaperonin GroES, plays an essential role in assisting protein folding. The GroEL-GroES system forms a nano-cage that allows encapsulation of the non-native substrate proteins and provides a physical environment optimized to promote and accelerate protein folding. This chain is Chaperonin GroEL 1, found in Synechocystis sp. (strain ATCC 27184 / PCC 6803 / Kazusa).